The sequence spans 814 residues: Lon protease 1 (814 aa).

A compositionally biased stretch (basic and acidic residues) spans 1 to 17 (MTDDRDKTNEDPEKIIE). The tract at residues 1 to 28 (MTDDRDKTNEDPEKIIEADFNPEDPDDA) is disordered. The Lon N-terminal domain occupies 49-245 (LPIIPLRPRP…KVLVLLKKEL (197 aa)). Position 398–405 (398–405 (GPPGVGKT)) interacts with ATP. The Lon proteolytic domain occupies 633–814 (EDVPGVVTGL…YRDVYQVAFG (182 aa)). Catalysis depends on residues Ser-721 and Lys-764.

This sequence belongs to the peptidase S16 family. As to quaternary structure, homohexamer. Organized in a ring with a central cavity.

Its subcellular location is the cytoplasm. It carries out the reaction Hydrolysis of proteins in presence of ATP.. ATP-dependent serine protease that mediates the selective degradation of mutant and abnormal proteins as well as certain short-lived regulatory proteins. Required for cellular homeostasis and for survival from DNA damage and developmental changes induced by stress. Degrades polypeptides processively to yield small peptide fragments that are 5 to 10 amino acids long. Binds to DNA in a double-stranded, site-specific manner. The sequence is that of Lon protease 1 from Syntrophotalea carbinolica (strain DSM 2380 / NBRC 103641 / GraBd1) (Pelobacter carbinolicus).